The sequence spans 314 residues: Protein translocase subunit SecF (314 aa).

Transmembrane regions (helical) follow at residues 17 to 37 (AVAV…TRGL), 137 to 157 (QGTY…WWRY), 158 to 178 (ELNF…ITLG), 188 to 210 (SLPV…IVVF), 250 to 270 (TLIV…GFAF), and 272 to 292 (LLVG…LLLV).

The protein belongs to the SecD/SecF family. SecF subfamily. Forms a complex with SecD. Part of the essential Sec protein translocation apparatus which comprises SecA, SecYEG and auxiliary proteins SecDF. Other proteins may also be involved.

Its subcellular location is the cell inner membrane. Its function is as follows. Part of the Sec protein translocase complex. Interacts with the SecYEG preprotein conducting channel. SecDF uses the proton motive force (PMF) to complete protein translocation after the ATP-dependent function of SecA. This is Protein translocase subunit SecF from Desulfurispirillum indicum (strain ATCC BAA-1389 / DSM 22839 / S5).